We begin with the raw amino-acid sequence, 400 residues long: Pectinesterase B (400 aa).

Thr171 and Gln205 together coordinate substrate. The active-site Proton donor is Asp228. Residue Asp261 is the Nucleophile of the active site. The substrate site is built by Arg325 and Trp327.

Belongs to the pectinesterase family.

The catalysed reaction is [(1-&gt;4)-alpha-D-galacturonosyl methyl ester](n) + n H2O = [(1-&gt;4)-alpha-D-galacturonosyl](n) + n methanol + n H(+). Its pathway is glycan metabolism; pectin degradation; 2-dehydro-3-deoxy-D-gluconate from pectin: step 1/5. This Pectobacterium parmentieri protein is Pectinesterase B (pemB).